The sequence spans 94 residues: Pyrimidine/purine nucleoside phosphorylase 2 (94 aa).

The protein belongs to the nucleoside phosphorylase PpnP family.

It catalyses the reaction a purine D-ribonucleoside + phosphate = a purine nucleobase + alpha-D-ribose 1-phosphate. The catalysed reaction is adenosine + phosphate = alpha-D-ribose 1-phosphate + adenine. It carries out the reaction cytidine + phosphate = cytosine + alpha-D-ribose 1-phosphate. The enzyme catalyses guanosine + phosphate = alpha-D-ribose 1-phosphate + guanine. It catalyses the reaction inosine + phosphate = alpha-D-ribose 1-phosphate + hypoxanthine. The catalysed reaction is thymidine + phosphate = 2-deoxy-alpha-D-ribose 1-phosphate + thymine. It carries out the reaction uridine + phosphate = alpha-D-ribose 1-phosphate + uracil. The enzyme catalyses xanthosine + phosphate = alpha-D-ribose 1-phosphate + xanthine. In terms of biological role, catalyzes the phosphorolysis of diverse nucleosides, yielding D-ribose 1-phosphate and the respective free bases. Can use uridine, adenosine, guanosine, cytidine, thymidine, inosine and xanthosine as substrates. Also catalyzes the reverse reactions. This is Pyrimidine/purine nucleoside phosphorylase 2 from Psychrobacter cryohalolentis (strain ATCC BAA-1226 / DSM 17306 / VKM B-2378 / K5).